A 733-amino-acid polypeptide reads, in one-letter code: Nuclear hormone receptor family member nhr-66 (733 aa).

Low complexity-rich tracts occupy residues 113-130 (PAIPSSSSCSEPSTSQAS) and 165-185 (QQNRQQHQQQQRQQQQAQQQN). A disordered region spans residues 113–190 (PAIPSSSSCS…AQQQNSMARK (78 aa)). The segment at residues 266 to 343 (VPACAICGTD…SGMDKNSVQH (78 aa)) is a DNA-binding region (nuclear receptor). NR C4-type zinc fingers lie at residues 269 to 289 (CAICGTDSTGIHFGVDACAAC) and 305 to 326 (CNKGGKCTVVKDGSAGQKCRAC). Positions 361-396 (PDAEFEPSAKVSTVSEPSTSSGPSGGFNQNVSSPAG) are disordered. Over residues 371–382 (VSTVSEPSTSSG) the composition is skewed to low complexity. An NR LBD domain is found at 444–687 (CLGDWFRKPS…ACFNQMLDVE (244 aa)). The segment at 676-687 (ADACFNQMLDVE) is AF-2. The disordered stretch occupies residues 691–733 (VSPDGQKDSEAEQGPSPVSVPEAARGSYQDDDMPPVLEKNCDL).

Belongs to the nuclear hormone receptor family. In terms of assembly, interacts with nuclear hormone receptor nhr-49; the interaction is direct. Widely expressed, including in hypodermis, gut, muscle, and neuronal cells of the ventral nerve cord, head, and tail ganglia. Expressed in the head ganglion in several sensory and interneurons, including AVA.

It localises to the nucleus. Functionally, transcription factor. Binds to regulatory elements and regulates transcription of target genes, including the potassium channel accessory subunit mps-2. Negatively regulates transcription of mps-2, thereby modulating age-dependent memory decline. In concert with nuclear hormone receptor nhr-49, involved in regulating target genes with roles in sphingolipid breakdown and lipid remodeling. Plays a role in modulating mitochondrial morphology and function. The polypeptide is Nuclear hormone receptor family member nhr-66 (Caenorhabditis elegans).